A 563-amino-acid chain; its full sequence is Protein disulfide isomerase-like 1-4 (563 aa).

The first 22 residues, Met-1–Ala-22, serve as a signal peptide directing secretion. The interval Asn-40–Gln-64 is disordered. A Thioredoxin 1 domain is found at Leu-46–Ala-180. Asn-82 is a glycosylation site (N-linked (GlcNAc...) asparagine). Residues Cys-102 and Cys-105 each act as nucleophile in the active site. A disulfide bridge links Cys-102 with Cys-105. 2 N-linked (GlcNAc...) asparagine glycosylation sites follow: Asn-185 and Asn-315. Residues Phe-394 to Ser-523 form the Thioredoxin 2 domain. Catalysis depends on nucleophile residues Cys-444 and Cys-447. A disulfide bond links Cys-444 and Cys-447. Residues Lys-529–Gln-542 show a composition bias toward basic and acidic residues. Residues Lys-529–Leu-563 are disordered. Polar residues predominate over residues Ser-543 to Leu-563. A Prevents secretion from ER motif is present at residues Lys-560–Leu-563.

Belongs to the protein disulfide isomerase family.

The protein localises to the endoplasmic reticulum lumen. The catalysed reaction is Catalyzes the rearrangement of -S-S- bonds in proteins.. Its function is as follows. Acts as a protein-folding catalyst that interacts with nascent polypeptides to catalyze the formation, isomerization, and reduction or oxidation of disulfide bonds. May play a role in storage protein biogenesis. The sequence is that of Protein disulfide isomerase-like 1-4 (PDIL1-4) from Oryza sativa subsp. japonica (Rice).